Reading from the N-terminus, the 686-residue chain is DNA ligase 2 (686 aa).

NAD(+)-binding positions include 37 to 41 (DDEYD), 86 to 87 (SL), and E121. The active-site N6-AMP-lysine intermediate is K123. NAD(+)-binding residues include R144, E179, K295, and K319. The Zn(2+) site is built by C413, C416, C431, and C436. The 89-residue stretch at 593 to 681 (VRGEQLAGLN…GVQLPGVQAS (89 aa)) folds into the BRCT domain.

It belongs to the NAD-dependent DNA ligase family. LigA subfamily. Mg(2+) serves as cofactor. The cofactor is Mn(2+).

It carries out the reaction NAD(+) + (deoxyribonucleotide)n-3'-hydroxyl + 5'-phospho-(deoxyribonucleotide)m = (deoxyribonucleotide)n+m + AMP + beta-nicotinamide D-nucleotide.. DNA ligase that catalyzes the formation of phosphodiester linkages between 5'-phosphoryl and 3'-hydroxyl groups in double-stranded DNA using NAD as a coenzyme and as the energy source for the reaction. It is essential for DNA replication and repair of damaged DNA. This chain is DNA ligase 2, found in Deinococcus deserti (strain DSM 17065 / CIP 109153 / LMG 22923 / VCD115).